A 554-amino-acid polypeptide reads, in one-letter code: Raftlin (554 aa).

G2 is lipidated: N-myristoyl glycine. C3 carries S-palmitoyl cysteine lipidation. Phosphoserine occurs at positions 183 and 199. Disordered regions lie at residues 192 to 249 (CTLG…NEAG), 441 to 488 (KKRE…DQFS), and 504 to 554 (GRAS…TEAN). Composition is skewed to basic and acidic residues over residues 198–209 (SSLENDTPKAAE) and 475–487 (QAEE…EDQF). Phosphoserine is present on residues S507 and S530. Over residues 526–542 (HNRDSVALRHSNPRAEA) the composition is skewed to basic and acidic residues.

Belongs to the raftlin family. In terms of assembly, interacts with TLR4; the interaction occurs in response to lipopolysaccharide stimulation. Interacts with CLTC; the interaction occurs in response to pathogens. Interacts with AP2A1 and AP2B1. In terms of tissue distribution, expressed in T-cells, B-cells, thymus and spleen (at protein level). Expressed in dendritic cells, macrophages, heart, lung and small intestine.

The protein resides in the cell membrane. The protein localises to the cytoplasm. It is found in the membrane raft. Its subcellular location is the endosome. It localises to the early endosome. Its function is as follows. Involved in protein trafficking via association with clathrin and AP2 complex. Upon bacterial lipopolysaccharide stimulation, mediates internalization of TLR4 to endosomes in dendritic cells and macrophages, and internalization of poly(I:C) to TLR3-positive endosomes in myeloid dendritic cells and epithelial cells; resulting in activation of TICAM1-mediated signaling and subsequent IFNB1 production. Involved in T-cell antigen receptor-mediated signaling by regulating tyrosine kinase LCK localization, T-cell dependent antibody production and cytokine secretion. May regulate B-cell antigen receptor-mediated signaling. May play a pivotal role in the formation and/or maintenance of lipid rafts. This chain is Raftlin (Rftn1), found in Mus musculus (Mouse).